The following is a 378-amino-acid chain: Probable pectin lyase A (378 aa).

Residues 1 to 19 (MKFPAFITAIISIASLSSA) form the signal peptide. Disulfide bonds link Cys-82-Cys-101 and Cys-91-Cys-225. The active site involves Arg-255. The cysteines at positions 321 and 329 are disulfide-linked.

It belongs to the polysaccharide lyase 1 family.

It is found in the secreted. It carries out the reaction Eliminative cleavage of (1-&gt;4)-alpha-D-galacturonan methyl ester to give oligosaccharides with 4-deoxy-6-O-methyl-alpha-D-galact-4-enuronosyl groups at their non-reducing ends.. Its function is as follows. Pectinolytic enzymes consist of four classes of enzymes: pectin lyase, polygalacturonase, pectin methylesterase and rhamnogalacturonase. Among pectinolytic enzymes, pectin lyase is the most important in depolymerization of pectin, since it cleaves internal glycosidic bonds of highly methylated pectins. In Aspergillus terreus (strain NIH 2624 / FGSC A1156), this protein is Probable pectin lyase A (pelA).